The chain runs to 1616 residues: Myosin-IIIa (1616 aa).

Residues Trp21–Ile287 enclose the Protein kinase domain. Residues Ile27–Val35 and Lys50 contribute to the ATP site. Catalysis depends on Asp150, which acts as the Proton acceptor. Positions Lys338–Lys1053 constitute a Myosin motor domain. The interval Leu934–Ser956 is actin-binding. 3 IQ domains span residues Ala1055–Glu1084, Arg1082–Thr1111, and Glu1346–Lys1375. The interval Glu1401–Ser1479 is interaction with MORN4. Disordered regions lie at residues Leu1545–Leu1567 and Ala1581–Ser1616. Composition is skewed to basic and acidic residues over residues Gly1550 to Gln1564 and Ser1583 to Pro1592. Basic residues predominate over residues Leu1602 to Ser1616.

It in the C-terminal section; belongs to the TRAFAC class myosin-kinesin ATPase superfamily. Myosin family. The protein in the N-terminal section; belongs to the protein kinase superfamily. STE Ser/Thr protein kinase family. Interacts with MORN4. Interacts (via C-terminus) with ESPN and ESPNL. As to expression, strongest expression in retina, retinal pigment epithelial cells, cochlea and pancreas.

The protein resides in the cytoplasm. It localises to the cytoskeleton. Its subcellular location is the cell projection. It is found in the filopodium tip. The protein localises to the stereocilium. It carries out the reaction L-seryl-[protein] + ATP = O-phospho-L-seryl-[protein] + ADP + H(+). It catalyses the reaction L-threonyl-[protein] + ATP = O-phospho-L-threonyl-[protein] + ADP + H(+). The catalysed reaction is ATP + H2O = ADP + phosphate + H(+). Its function is as follows. Actin-dependent motor protein with a protein kinase activity, playing an essential role in hearing. Probably also plays a role in vision. Required for normal cochlear hair bundle development and hearing. Plays an important role in the early steps of cochlear hair bundle morphogenesis. Influences the number and lengths of stereocilia to be produced and limits the growth of microvilli within the forming auditory hair bundles thereby contributing to the architecture of the hair bundle, including its staircase pattern. Involved in the elongation of actin in stereocilia tips by transporting the actin regulatory factor ESPN to the plus ends of actin filaments. This is Myosin-IIIa (MYO3A) from Homo sapiens (Human).